We begin with the raw amino-acid sequence, 628 residues long: uncharacterized protein (628 aa).

This sequence belongs to the IucA/IucC family.

This is an uncharacterized protein from Sinorhizobium fredii (strain NBRC 101917 / NGR234).